The sequence spans 258 residues: Gamma carbonic anhydrase 3, mitochondrial (258 aa).

A mitochondrion-targeting transit peptide spans 1 to 43 (MGTMGKAFYSVGFWIRETGQALDRLGCRLQGKNHFREQLSRHR). Substrate-binding positions include 86 to 88 (RGD) and 101 to 102 (QD). Histidine 107, histidine 130, and histidine 135 together coordinate Zn(2+). Asparagine 209 lines the substrate pocket.

The protein belongs to the gamma-class carbonic anhydrase family. Homotrimer. Component of the oxidoreductase respiratory chain complex I; element of the extra matrix-exposed domain, which is attached to the membrane arm of this complex. Zn(2+) is required as a cofactor.

The protein resides in the mitochondrion membrane. Its function is as follows. Enzyme involved in the catabolism of H(2)CO(3) but that does not mediates the reversible hydration of carbon dioxide. Mediates complex I assembly in mitochondria and respiration. This chain is Gamma carbonic anhydrase 3, mitochondrial (GAMMACA3), found in Arabidopsis thaliana (Mouse-ear cress).